The sequence spans 62 residues: Dual specificity mitogen-activated protein kinase kinase 3 (62 aa).

The Protein kinase domain maps to 1 to 62; that stretch reads GKIAVSIVKA…VAKTMDAGCK (62 aa).

Belongs to the protein kinase superfamily. STE Ser/Thr protein kinase family. MAP kinase kinase subfamily. In terms of processing, activated by phosphorylation on Ser/Thr catalyzed by MAP kinase kinase kinases.

The enzyme catalyses L-seryl-[protein] + ATP = O-phospho-L-seryl-[protein] + ADP + H(+). The catalysed reaction is L-threonyl-[protein] + ATP = O-phospho-L-threonyl-[protein] + ADP + H(+). It catalyses the reaction L-tyrosyl-[protein] + ATP = O-phospho-L-tyrosyl-[protein] + ADP + H(+). Catalyzes the concomitant phosphorylation of a threonine and a tyrosine residue in a Thr-Glu-Tyr sequence located in MAP kinases. The chain is Dual specificity mitogen-activated protein kinase kinase 3 (map2k3) from Xenopus laevis (African clawed frog).